Reading from the N-terminus, the 288-residue chain is 4-diphosphocytidyl-2-C-methyl-D-erythritol kinase (288 aa).

The active site involves Lys-11. ATP is bound at residue 93-103; the sequence is PFGAGLGGGSS. The active site involves Asp-135.

This sequence belongs to the GHMP kinase family. IspE subfamily.

It carries out the reaction 4-CDP-2-C-methyl-D-erythritol + ATP = 4-CDP-2-C-methyl-D-erythritol 2-phosphate + ADP + H(+). Its pathway is isoprenoid biosynthesis; isopentenyl diphosphate biosynthesis via DXP pathway; isopentenyl diphosphate from 1-deoxy-D-xylulose 5-phosphate: step 3/6. Functionally, catalyzes the phosphorylation of the position 2 hydroxy group of 4-diphosphocytidyl-2C-methyl-D-erythritol. The polypeptide is 4-diphosphocytidyl-2-C-methyl-D-erythritol kinase (Chlorobium limicola (strain DSM 245 / NBRC 103803 / 6330)).